The chain runs to 463 residues: Movement protein TGB1 (463 aa).

Residues 1–126 (MESGFNGSRP…RIPEEGGGGL (126 aa)) are disordered. 2 nucleolar localization signal regions span residues 11–16 (HRVKKD) and 37–52 (FRKN…KPRS). Positions 23–49 (PVNTQGSSGTTGNAFRKNNNNKTQNWK) are enriched in polar residues. Residues 58 to 67 (NEGDQTKNNK) are compositionally biased toward basic and acidic residues. Residues 83–95 (RPESSTGESVKQQ) are compositionally biased toward polar residues. Positions 96–107 (SEPHRVLEDKKQ) are enriched in basic and acidic residues. Residues 185-326 (CNLSQRESEV…WLQVPVIFQS (142 aa)) form the (+)RNA virus helicase ATP-binding domain. 215–222 (GVPGSGKT) contacts ATP. The 137-residue stretch at 327 to 463 (LTSRRFGKAT…QPQTDRYGPE (137 aa)) folds into the (+)RNA virus helicase C-terminal domain.

Belongs to the virgaviridae/benyvirus TGB1 movement protein family. In terms of assembly, homooligomer. TGB1-TGB3-TGB2 complex formation is enhanced by ATP hydrolysis. Interacts with the suppressor of RNA silencing (via N-terminus). Interacts (via N-terminus) with host importin IMPA1. Mg(2+) is required as a cofactor.

It localises to the host cell junction. The protein resides in the host plasmodesma. Its subcellular location is the host nucleus. It is found in the host cytoplasm. The protein localises to the host nucleolus. It localises to the host cytoskeleton. The enzyme catalyses ATP + H2O = ADP + phosphate + H(+). Functionally, participates in the transport of viral genome to neighboring plant cells directly through plasmodesmata, without any budding. Multifunctional movement protein with RNA-binding, ATPase and helicase activities. Engages in homologous interactions leading to the formation of a ribonucleoprotein complex containing plus-sense viral RNAs (vRNPs). ATPase activity is probably required for vRNPs movement complex assembly. Intracellular delivery of TGBp1-containing vRNPs to plasmodesmata is facilitated by TGBp2 and TGBp3. The protein is Movement protein TGB1 of Potato mop-top virus (isolate Potato/Sweden/Sw) (PMTV).